A 109-amino-acid polypeptide reads, in one-letter code: Tektin-3 (109 aa).

This sequence belongs to the tektin family. In terms of assembly, microtubule inner protein component of sperm flagellar doublet microtubules. Interacts with TEKT1, TEKT2, TEKT4 and TEKT5. Interacts with CCDC38. N- and O-glycosylated. In terms of processing, may be proteolytically processed during the epididymal transit of spermatozoa. Post-translationally, ubiquitinated, leading to its degradation. Deubiquitinated by USP16, promoting its stability.

The protein resides in the cytoplasm. It localises to the cytoskeleton. It is found in the cilium axoneme. Its subcellular location is the flagellum axoneme. The protein localises to the cytoplasmic vesicle. The protein resides in the secretory vesicle. It localises to the acrosome outer membrane. Functionally, microtubule inner protein (MIP) part of the dynein-decorated doublet microtubules (DMTs) in cilia and flagellar axoneme. Forms filamentous polymers in the walls of ciliary and flagellar microtubules. Required for normal sperm mobility. This chain is Tektin-3, found in Mesocricetus auratus (Golden hamster).